Here is a 60-residue protein sequence, read N- to C-terminus: Large ribosomal subunit protein bL32 (60 aa).

The protein belongs to the bacterial ribosomal protein bL32 family.

In Borrelia hermsii (strain HS1 / DAH), this protein is Large ribosomal subunit protein bL32.